Consider the following 317-residue polypeptide: Protease 7 (317 aa).

The N-terminal stretch at 1–20 (MRAKLLGIVLTTPIAISSFA) is a signal peptide. Over 21 to 31 (STETLSFTPDN) the chain is Periplasmic. Residues 32 to 41 (INADISLGTL) traverse the membrane as a beta stranded segment. Over 42–69 (SGKTKERVYLAEEGGRKVSQLDWKFNNA) the chain is Extracellular. Residues 70 to 78 (AIIKGAINW) traverse the membrane as a beta stranded segment. Residues 79–83 (DLMPQ) are Periplasmic-facing. The beta stranded transmembrane segment at 84–92 (ISIGAAGWT) threads the bilayer. The Extracellular segment spans residues 93 to 130 (TLGSRGGNMVDQDWMDSSNPGTWTDESRHPDTQLNYAN). Active-site residues include Asp-103 and Asp-105. The chain crosses the membrane as a beta stranded span at residues 131–140 (EFDLNIKGWL). Over 141–145 (LNEPN) the chain is Periplasmic. The chain crosses the membrane as a beta stranded span at residues 146–156 (YRLGLMAGYQE). Over 157–197 (SRYSFTARGGSYIYSSEEGFRDDIGSFPNGERAIGYKQRFK) the chain is Extracellular. Residues 198–209 (MPYIGLTGSYRY) form a beta stranded membrane-spanning segment. Residues 210–211 (ED) are Periplasmic-facing. Residues 212-221 (FELGGTFKYS) form a beta stranded membrane-spanning segment. The Extracellular portion of the chain corresponds to 222-250 (GWVESSDNDEHYDPGKRITYRSKVKDQNY). Catalysis depends on residues Asp-230 and His-232. A beta stranded membrane pass occupies residues 251–261 (YSVAVNAGYYV). At 262 to 264 (TPN) the chain is on the periplasmic side. A beta stranded transmembrane segment spans residues 265–274 (AKVYVEGAWN). The Extracellular segment spans residues 275–306 (RVTNKKGNTSLYDHNNNTSDYSKNGAGIENYN). Residues 307 to 316 (FITTAGLKYT) traverse the membrane as a beta stranded segment. A topological domain (periplasmic) is located at residue Phe-317.

Belongs to the peptidase A26 family. As to quaternary structure, homopentamer.

Its subcellular location is the cell outer membrane. It catalyses the reaction Has a virtual requirement for Arg in the P1 position and a slightly less stringent preference for this residue in the P1' position, which can also contain Lys, Gly or Val.. Its activity is regulated as follows. Inhibited by zinc. Its function is as follows. Protease that can cleave T7 RNA polymerase, ferric enterobactin receptor protein (FEP), antimicrobial peptide protamine and other proteins. This protease has a specificity for paired basic residues. This chain is Protease 7 (ompT), found in Escherichia coli (strain K12).